A 236-amino-acid chain; its full sequence is Probable glutathione S-transferase GSTU6 (236 aa).

Residues 5–84 (GELKLLGVWS…YIDEVWPGGA (80 aa)) enclose the GST N-terminal domain. Residues Ser15, Lys42, Val56, and 68-69 (ES) each bind glutathione. Residues 94 to 228 (DPYERAVARF…KLLEFRQTLL (135 aa)) enclose the GST C-terminal domain.

It belongs to the GST superfamily. Tau family. As to expression, expressed in seedling shoots and roots.

The enzyme catalyses RX + glutathione = an S-substituted glutathione + a halide anion + H(+). Functionally, conjugation of reduced glutathione to a wide number of exogenous and endogenous hydrophobic electrophiles. In Oryza sativa subsp. japonica (Rice), this protein is Probable glutathione S-transferase GSTU6 (GSTU6).